The sequence spans 80 residues: Metallothionein-like protein type 2 (80 aa).

The protein belongs to the metallothionein superfamily. Type 15 family.

In terms of biological role, metallothioneins have a high content of cysteine residues that bind various heavy metals. The sequence is that of Metallothionein-like protein type 2 (MTI) from Ricinus communis (Castor bean).